We begin with the raw amino-acid sequence, 359 residues long: Ribosomal RNA small subunit methyltransferase H (359 aa).

S-adenosyl-L-methionine is bound by residues 39–41 (AGH), aspartate 58, phenylalanine 87, aspartate 108, and glutamine 115. The disordered stretch occupies residues 339-359 (IQGSASPGRAKNTARIRTRRG). The span at 350 to 359 (NTARIRTRRG) shows a compositional bias: basic residues.

The protein belongs to the methyltransferase superfamily. RsmH family.

It localises to the cytoplasm. It catalyses the reaction cytidine(1402) in 16S rRNA + S-adenosyl-L-methionine = N(4)-methylcytidine(1402) in 16S rRNA + S-adenosyl-L-homocysteine + H(+). Functionally, specifically methylates the N4 position of cytidine in position 1402 (C1402) of 16S rRNA. The polypeptide is Ribosomal RNA small subunit methyltransferase H (Bifidobacterium longum subsp. infantis (strain ATCC 15697 / DSM 20088 / JCM 1222 / NCTC 11817 / S12)).